The following is a 292-amino-acid chain: MSIIEAIILGLVQGLTEFLPISSSGHLRIVAAFSGWPDPGAAFTAVSQIGTELAVLIYFRKDVGNILATWFRSLGNKELRRHIDARMGWYVIIGSIPIGVAGLLFEEQISAPFRDLRLTALTLIVFGVLLGMVDRYSRKHRELTDLNAQRGLIYGLFQMLALIPGVSRSGATVTGGMLMGFKREAAARYAFLLAMPAVFASGLYKLKDIGGNEYAGVGATIVGTLVAFAVGYAVIAWFMRFISTNSFMPFVYYRIALGILILALVSFGVLTPESGAEFEGSAASVTAAEATH.

A run of 5 helical transmembrane segments spans residues Met87–Glu107, Phe113–Val133, Ala190–Gly210, Ala219–Met239, and Phe250–Leu270.

It belongs to the UppP family.

Its subcellular location is the cell membrane. It carries out the reaction di-trans,octa-cis-undecaprenyl diphosphate + H2O = di-trans,octa-cis-undecaprenyl phosphate + phosphate + H(+). Catalyzes the dephosphorylation of undecaprenyl diphosphate (UPP). Confers resistance to bacitracin. The protein is Undecaprenyl-diphosphatase of Thermobifida fusca (strain YX).